The sequence spans 122 residues: Large ribosomal subunit protein uL14c (122 aa).

The protein belongs to the universal ribosomal protein uL14 family. In terms of assembly, part of the 50S ribosomal subunit.

It is found in the plastid. Its subcellular location is the chloroplast. In terms of biological role, binds to 23S rRNA. The protein is Large ribosomal subunit protein uL14c of Lepidium virginicum (Virginia pepperweed).